We begin with the raw amino-acid sequence, 158 residues long: NAD(P)H-quinone oxidoreductase subunit J, chloroplastic (158 aa).

This sequence belongs to the complex I 30 kDa subunit family. In terms of assembly, NDH is composed of at least 16 different subunits, 5 of which are encoded in the nucleus.

It is found in the plastid. Its subcellular location is the chloroplast thylakoid membrane. The enzyme catalyses a plastoquinone + NADH + (n+1) H(+)(in) = a plastoquinol + NAD(+) + n H(+)(out). It carries out the reaction a plastoquinone + NADPH + (n+1) H(+)(in) = a plastoquinol + NADP(+) + n H(+)(out). NDH shuttles electrons from NAD(P)H:plastoquinone, via FMN and iron-sulfur (Fe-S) centers, to quinones in the photosynthetic chain and possibly in a chloroplast respiratory chain. The immediate electron acceptor for the enzyme in this species is believed to be plastoquinone. Couples the redox reaction to proton translocation, and thus conserves the redox energy in a proton gradient. The polypeptide is NAD(P)H-quinone oxidoreductase subunit J, chloroplastic (Cryptomeria japonica (Japanese cedar)).